A 62-amino-acid chain; its full sequence is Paralithocin 1 (62 aa).

The first 23 residues, 1–23, serve as a signal peptide directing secretion; the sequence is MGPMKVLLVLLVVMVAAPHIADA. 4 cysteine pairs are disulfide-bonded: cysteine 29–cysteine 55, cysteine 33–cysteine 51, cysteine 37–cysteine 49, and cysteine 42–cysteine 52. Tyrosine 61 carries the post-translational modification Tyrosine amide; partial.

Belongs to the paralithocin family. Post-translationally, the amidated form is probably the active form.

Its function is as follows. Has weak antibacterial activity, mainly against marine Gram-positive bacteria like C.maltaromaticum (MIC=200 uM), C.mobile (MIC=100 uM), C.divergens (MIC=200 uM) and C.funditum (MIC=200 uM) but also against C.glutamicum (MIC=50 uM). Has very little or no activity against Gram-negative bacteria. This chain is Paralithocin 1, found in Paralithodes camtschaticus (Red king crab).